Reading from the N-terminus, the 405-residue chain is 1-deoxy-D-xylulose 5-phosphate reductoisomerase (405 aa).

NADPH-binding residues include Thr16, Gly17, Ser18, Ile19, Gly42, Arg43, Asn44, and Asn130. 1-deoxy-D-xylulose 5-phosphate is bound at residue Lys131. An NADPH-binding site is contributed by Glu132. Residue Asp156 participates in Mn(2+) binding. Ser157, Glu158, Ser192, and His215 together coordinate 1-deoxy-D-xylulose 5-phosphate. A Mn(2+)-binding site is contributed by Glu158. Residue Gly221 participates in NADPH binding. 1-deoxy-D-xylulose 5-phosphate is bound by residues Ser228, Asn233, Lys234, and Glu237. Glu237 serves as a coordination point for Mn(2+).

The protein belongs to the DXR family. The cofactor is Mg(2+). It depends on Mn(2+) as a cofactor.

The catalysed reaction is 2-C-methyl-D-erythritol 4-phosphate + NADP(+) = 1-deoxy-D-xylulose 5-phosphate + NADPH + H(+). The protein operates within isoprenoid biosynthesis; isopentenyl diphosphate biosynthesis via DXP pathway; isopentenyl diphosphate from 1-deoxy-D-xylulose 5-phosphate: step 1/6. Functionally, catalyzes the NADPH-dependent rearrangement and reduction of 1-deoxy-D-xylulose-5-phosphate (DXP) to 2-C-methyl-D-erythritol 4-phosphate (MEP). The sequence is that of 1-deoxy-D-xylulose 5-phosphate reductoisomerase from Pasteurella multocida (strain Pm70).